Consider the following 446-residue polypeptide: D(1A) dopamine receptor (446 aa).

The Extracellular portion of the chain corresponds to 1-23 (MRTLNTSTMDGTGLVVERDFSFR). N5 carries N-linked (GlcNAc...) asparagine glycosylation. The helical transmembrane segment at 24-49 (ILTACFLSLLILSTLLGNTLVCAAVI) threads the bilayer. Topologically, residues 50–60 (RFRHLRSKVTN) are cytoplasmic. Residues 61-87 (FFVISLAVSDLLVAVLVMPWKAVAEIA) form a helical membrane-spanning segment. The Extracellular segment spans residues 88–96 (GFWPFGSFC). C96 and C186 are joined by a disulfide. A helical membrane pass occupies residues 97-119 (NIWVAFDIMCSTASILNLCVISV). Residues 120–138 (DRYWAISSPFRYERKMTPK) are Cytoplasmic-facing. Residues 139–163 (AAFILISVAWTLSVLISFIPVQLSW) traverse the membrane as a helical segment. The Extracellular portion of the chain corresponds to 164–192 (HKAKPTSPSDGNVTSLGKTTHNCDSSLSR). The chain crosses the membrane as a helical span at residues 193 to 218 (TYAISSSLISFYIPVAIMIVTYTRIY). At 219–272 (RIAQKQIRRISALERAAVHAKNCQTTAGNGNPAECSQPESSFKMSFKRETKVLK) the chain is on the cytoplasmic side. The chain crosses the membrane as a helical span at residues 273-299 (TLSVIMGVFVCCWLPFFILNCMVPFCG). At 300 to 312 (SGETKPFCIDSIT) the chain is on the extracellular side. The helical transmembrane segment at 313–337 (FDVFVWFGWANSSLNPIIYAFNADF) threads the bilayer. The Cytoplasmic segment spans residues 338–446 (RKAFSTLLGC…PITQNGQHPT (109 aa)). 2 S-palmitoyl cysteine lipidation sites follow: C347 and C351.

Belongs to the G-protein coupled receptor 1 family. Interacts with DNAJC14 via its C-terminus. Interacts with DRD2. Interacts with DORIP1.

The protein localises to the cell membrane. It is found in the endoplasmic reticulum membrane. Its subcellular location is the cell projection. It localises to the cilium membrane. The protein resides in the dendrite. The protein localises to the dendritic spine. Its function is as follows. Dopamine receptor whose activity is mediated by G proteins which activate adenylyl cyclase. This chain is D(1A) dopamine receptor (DRD1), found in Sus scrofa (Pig).